Consider the following 227-residue polypeptide: Orotidine 5'-phosphate decarboxylase (227 aa).

Substrate is bound by residues aspartate 8, lysine 30, 58-67 (DLKLYDIPNT), threonine 117, arginine 177, glutamine 186, glycine 206, and arginine 207. Lysine 60 (proton donor) is an active-site residue.

It belongs to the OMP decarboxylase family. Type 1 subfamily. As to quaternary structure, homodimer.

It catalyses the reaction orotidine 5'-phosphate + H(+) = UMP + CO2. Its pathway is pyrimidine metabolism; UMP biosynthesis via de novo pathway; UMP from orotate: step 2/2. Its function is as follows. Catalyzes the decarboxylation of orotidine 5'-monophosphate (OMP) to uridine 5'-monophosphate (UMP). The protein is Orotidine 5'-phosphate decarboxylase of Campylobacter lari (strain RM2100 / D67 / ATCC BAA-1060).